Here is a 372-residue protein sequence, read N- to C-terminus: UDP-N-acetylglucosamine--N-acetylmuramyl-(pentapeptide) pyrophosphoryl-undecaprenol N-acetylglucosamine transferase (372 aa).

UDP-N-acetyl-alpha-D-glucosamine-binding positions include 21 to 23, Asn-135, Arg-172, Ser-206, and Gln-303; that span reads TAG.

The protein belongs to the glycosyltransferase 28 family. MurG subfamily.

It localises to the cell membrane. It carries out the reaction di-trans,octa-cis-undecaprenyl diphospho-N-acetyl-alpha-D-muramoyl-L-alanyl-D-glutamyl-meso-2,6-diaminopimeloyl-D-alanyl-D-alanine + UDP-N-acetyl-alpha-D-glucosamine = di-trans,octa-cis-undecaprenyl diphospho-[N-acetyl-alpha-D-glucosaminyl-(1-&gt;4)]-N-acetyl-alpha-D-muramoyl-L-alanyl-D-glutamyl-meso-2,6-diaminopimeloyl-D-alanyl-D-alanine + UDP + H(+). Its pathway is cell wall biogenesis; peptidoglycan biosynthesis. Its function is as follows. Cell wall formation. Catalyzes the transfer of a GlcNAc subunit on undecaprenyl-pyrophosphoryl-MurNAc-pentapeptide (lipid intermediate I) to form undecaprenyl-pyrophosphoryl-MurNAc-(pentapeptide)GlcNAc (lipid intermediate II). The protein is UDP-N-acetylglucosamine--N-acetylmuramyl-(pentapeptide) pyrophosphoryl-undecaprenol N-acetylglucosamine transferase of Paenarthrobacter aurescens (strain TC1).